We begin with the raw amino-acid sequence, 111 residues long: Phosphoribosyl-ATP pyrophosphatase (111 aa).

This sequence belongs to the PRA-PH family.

Its subcellular location is the cytoplasm. It catalyses the reaction 1-(5-phospho-beta-D-ribosyl)-ATP + H2O = 1-(5-phospho-beta-D-ribosyl)-5'-AMP + diphosphate + H(+). It functions in the pathway amino-acid biosynthesis; L-histidine biosynthesis; L-histidine from 5-phospho-alpha-D-ribose 1-diphosphate: step 2/9. The chain is Phosphoribosyl-ATP pyrophosphatase from Pseudomonas putida (strain ATCC 700007 / DSM 6899 / JCM 31910 / BCRC 17059 / LMG 24140 / F1).